Reading from the N-terminus, the 92-residue chain is Small ribosomal subunit protein bS21 (92 aa).

Positions 37–92 are disordered; sequence QREGTFREMKRRNHYEKPSEKKARQKAEAIRRARKLARKRAQREGLIAKRGGTTRR. The segment covering 51-67 has biased composition (basic and acidic residues); the sequence is YEKPSEKKARQKAEAIR. Basic residues predominate over residues 68 to 77; it reads RARKLARKRA.

Belongs to the bacterial ribosomal protein bS21 family.

This Maricaulis maris (strain MCS10) (Caulobacter maris) protein is Small ribosomal subunit protein bS21.